Consider the following 160-residue polypeptide: Major strawberry allergen Fra a 1.08 (160 aa).

It belongs to the BetVI family. Post-translationally, phosphorylated in vivo. Phosphorylation prevents its activity as ribonuclease. Highly expressed in roots. Expressed a low levels in ripe red fruits.

In terms of biological role, possesses ribonuclease activity in vitro. This is Major strawberry allergen Fra a 1.08 from Fragaria ananassa (Strawberry).